Consider the following 397-residue polypeptide: 1-deoxy-D-xylulose 5-phosphate reductoisomerase (397 aa).

NADPH is bound by residues Thr10, Gly11, Ser12, Ile13, Asn38, and Asn125. Lys126 is a binding site for 1-deoxy-D-xylulose 5-phosphate. Glu127 lines the NADPH pocket. Asp151 is a Mn(2+) binding site. Ser152, Glu153, Ser187, and His210 together coordinate 1-deoxy-D-xylulose 5-phosphate. Position 153 (Glu153) interacts with Mn(2+). An NADPH-binding site is contributed by Gly216. 1-deoxy-D-xylulose 5-phosphate is bound by residues Ser223, Asn228, Lys229, and Glu232. Position 232 (Glu232) interacts with Mn(2+).

The protein belongs to the DXR family. Homodimer. Mg(2+) is required as a cofactor. Requires Mn(2+) as cofactor.

It carries out the reaction 2-C-methyl-D-erythritol 4-phosphate + NADP(+) = 1-deoxy-D-xylulose 5-phosphate + NADPH + H(+). It functions in the pathway isoprenoid biosynthesis; isopentenyl diphosphate biosynthesis via DXP pathway; isopentenyl diphosphate from 1-deoxy-D-xylulose 5-phosphate: step 1/6. Functionally, catalyzes the NADPH-dependent rearrangement and reduction of 1-deoxy-D-xylulose-5-phosphate (DXP) to 2-C-methyl-D-erythritol 4-phosphate (MEP). The sequence is that of 1-deoxy-D-xylulose 5-phosphate reductoisomerase from Blochmanniella pennsylvanica (strain BPEN).